The primary structure comprises 25 residues: HVDKKVADKVLLLKQLRIMRLLTRL.

The protein resides in the secreted. In terms of biological role, active against Gram-positive bacteria B.megaterium and M.luteus, Gram-negative bacteria E.coli SBS363 and D22, K.pneumoniae, S.typhimurium and P.aeruginosa, yeast C.albicans and filamentous fungi F.culmorum, N.crassa, N.hematococca and T.viridae. Inactive against Gram-positive bacteria B.subtilis, S.pyogenes, B.thuringiensis and S.aureus, Gram-negative bacteria E.cloacae and E.carotovora and filamentous fungus B.bassiana. The sequence is that of Spinigerin from Pseudacanthotermes spiniger.